Reading from the N-terminus, the 475-residue chain is MRRERDATQIPENPMEGIPQTAAAAAAAAAAEASEPPRKRARVDGGGGGAGEEEEDRLSDLPDCLLEDILAHLGSRQAVQTSVLSRRWRNLWRGVRVVVIDVGSFRLPGADGDPPRFRLDRIEDFADGVLSPSLHPGAARELDALRMRLDEDAVTTNFQRWIRRALWRRPATVDLYYLPRRSFSWPPAVPLTPVTAVSRLKTLRIFGLRPTVVFGADEFPALEDLHIERCSYAHGTIASPTLKRLALVSPINGCFVREQRLTAPGLTSLRLVLPYSREEGVRVITDAPLTSLVDASITIVDTDPGDPRNRRVNQFKVDFLVAISNLLGRLTSVRNLDLTGLNATALLDNKSQEFPMFPYLTTLLLNECDIGYKYHVLRSILQNAPNLEQLRLHNCKFVGKSRRKAGQTQSKEKTSKCSSSTLSSACSSLKSVEIKHPRGEPSHDLLHEFLKEIPHNQWRKRSIDEETISIELNRK.

The disordered stretch occupies residues 1-58 (MRRERDATQIPENPMEGIPQTAAAAAAAAAAEASEPPRKRARVDGGGGGAGEEEEDRL). Residues 22 to 33 (AAAAAAAAAAEA) show a composition bias toward low complexity. The F-box domain occupies 55–91 (EDRLSDLPDCLLEDILAHLGSRQAVQTSVLSRRWRNL).

This sequence belongs to the F-box protein family. FBX subfamily. As to quaternary structure, part of a SCF (SKP1-CUL1-F-box protein) E3 ubiquitin-protein ligase complex. Interacts (via F-box domain) directly with SKP1. In terms of tissue distribution, highly expressed in the stem, leaf and in the anther during meiosis. Weakly expressed in roots and lemma/palea.

It is found in the nucleus. The protein localises to the chromosome. Its pathway is protein modification; protein ubiquitination. Probable component of a SCF (SKP1-CULLIN-F-box protein) E3 ubiquitin-protein ligase complex and may function through the ubiquitin-mediated protein degradation or signaling pathway. Required for male meiotic prophase I progression. Required for telomere bouquet formation, homologous chromosome pairing and for the formation of the synaptonemal complex (SC), which stabilizes initial chromosomal axial associations and promotes crossover formation. Involved in meiotic DNA double-strand break (DSB) end-processing and repair, and is important in the recruitment of DSB repair proteins to the DSB sites. The sequence is that of MEIOTIC F-BOX protein MOF from Oryza sativa subsp. japonica (Rice).